The following is a 181-amino-acid chain: MTITRGDFKLRLNQGEFTDSQIIVMLGENGTGKTTFIKMLAGSKLDIDEEGSQVHEIPQFSVSYKNQHMSNRKFEITVRDLIHRKIPNAYAEHQFVSDVMKPLKIEELMDKSFNKLSGGEKQRVALALCLGKSADIYLIDEPSAFLDSEQRIIASKVIKRFILQMKKAAFARFHNGYVFGR.

Residues 20–176 (SQIIVMLGEN…KAAFARFHNG (157 aa)) form the ABC transporter domain. Residue 27–34 (GENGTGKT) coordinates ATP.

Belongs to the ABC transporter superfamily. ABCE family. As to expression, mostly expressed in roots and leaves, and, to a lower extent, in stems, flowers and siliques.

In Arabidopsis thaliana (Mouse-ear cress), this protein is ABC transporter E family member 3 (ABCE3).